The chain runs to 156 residues: Envelope glycoprotein L (156 aa).

An N-terminal signal peptide occupies residues 1-16 (MSPLVAVLVFFSAALG). Residues 50 to 156 (ELEWDDEDHP…LRYNGGPPAE (107 aa)) form the gL alphaherpesvirus-type domain. A disulfide bond links cysteine 71 and cysteine 95.

It belongs to the herpesviridae glycoprotein L (gL) family. Alphaherpesvirinae gL subfamily. As to quaternary structure, interacts with glycoprotein H (gH); this interaction is necessary for the correct processing and cell surface expression of gH. The heterodimer gH/gL seems to interact with gB trimers during fusion. In terms of processing, O-glycosylated, and sialylated.

The protein localises to the virion membrane. The protein resides in the host cell membrane. It localises to the host Golgi apparatus. It is found in the host trans-Golgi network. In terms of biological role, the heterodimer glycoprotein H-glycoprotein L is required for the fusion of viral and plasma membranes leading to virus entry into the host cell. Acts as a functional inhibitor of gH and maintains gH in an inhibited form. Upon binding to host integrins, gL dissociates from gH leading to activation of the viral fusion glycoproteins gB and gH. This chain is Envelope glycoprotein L, found in Suid herpesvirus 1 (strain Indiana-Funkhauser / Becker) (SuHV-1).